The sequence spans 415 residues: Multidrug resistance protein MdtA (415 aa).

A signal peptide spans Met-1–Ala-21. The segment covering Asp-31–Pro-47 has biased composition (polar residues). 2 disordered regions span residues Asp-31–Ala-56 and Val-390–Ser-415. A compositionally biased stretch (basic and acidic residues) spans Pro-399 to Ser-415.

It belongs to the membrane fusion protein (MFP) (TC 8.A.1) family. Part of a tripartite efflux system composed of MdtA, MdtB and MdtC.

Its subcellular location is the cell inner membrane. Its function is as follows. The MdtABC tripartite complex confers resistance against novobiocin and deoxycholate. In Escherichia coli O6:H1 (strain CFT073 / ATCC 700928 / UPEC), this protein is Multidrug resistance protein MdtA.